The sequence spans 134 residues: Small ribosomal subunit protein uS11 (134 aa).

The span at 113–122 (SSITDATPQP) shows a compositional bias: polar residues. Residues 113–134 (SSITDATPQPHNGCRPTKRRKV) are disordered.

The protein belongs to the universal ribosomal protein uS11 family. Part of the 30S ribosomal subunit. Interacts with proteins S7 and S18. Binds to IF-3.

Located on the platform of the 30S subunit, it bridges several disparate RNA helices of the 16S rRNA. Forms part of the Shine-Dalgarno cleft in the 70S ribosome. The polypeptide is Small ribosomal subunit protein uS11 (Corynebacterium aurimucosum (strain ATCC 700975 / DSM 44827 / CIP 107346 / CN-1) (Corynebacterium nigricans)).